Reading from the N-terminus, the 640-residue chain is Phosphomethylpyrimidine synthase (640 aa).

Substrate is bound by residues N235, M264, Y293, H329, 349–351 (SRG), 390–393 (DGLR), and E429. Zn(2+) is bound at residue H433. Y456 contributes to the substrate binding site. H497 contacts Zn(2+). Residues C577, C580, and C585 each contribute to the [4Fe-4S] cluster site.

Belongs to the ThiC family. Homodimer. [4Fe-4S] cluster serves as cofactor.

The enzyme catalyses 5-amino-1-(5-phospho-beta-D-ribosyl)imidazole + S-adenosyl-L-methionine = 4-amino-2-methyl-5-(phosphooxymethyl)pyrimidine + CO + 5'-deoxyadenosine + formate + L-methionine + 3 H(+). It functions in the pathway cofactor biosynthesis; thiamine diphosphate biosynthesis. In terms of biological role, catalyzes the synthesis of the hydroxymethylpyrimidine phosphate (HMP-P) moiety of thiamine from aminoimidazole ribotide (AIR) in a radical S-adenosyl-L-methionine (SAM)-dependent reaction. The sequence is that of Phosphomethylpyrimidine synthase from Photobacterium profundum (strain SS9).